The sequence spans 614 residues: Zinc finger and SCAN domain-containing protein 2 (614 aa).

Disordered regions lie at residues 1–26 (MMAA…EDRQ) and 43–76 (EAVL…PQGA). Positions 59–132 (SAGKGGPQEE…ALVEDLTQTL (74 aa)) constitute an SCAN box domain. 14 C2H2-type zinc fingers span residues 222–244 (YECP…ERTH), 250–272 (YKCD…QTTH), 278–300 (YKCR…QRIH), 306–328 (FQCA…QRTH), 334–356 (YSCP…QGIH), 362–384 (YECK…QRIH), 390–412 (YKCT…RRTH), 418–440 (YQCS…RRTH), 446–468 (YKCG…QGMH), 474–496 (YECL…QRIH), 502–524 (YKCS…QRTH), 530–552 (YKCL…QRAH), 558–580 (YRCP…QRIH), and 586–608 (YKCP…QRTH).

The protein belongs to the krueppel C2H2-type zinc-finger protein family.

It localises to the nucleus. In terms of biological role, may be involved in transcriptional regulation during the post-meiotic stages of spermatogenesis. The protein is Zinc finger and SCAN domain-containing protein 2 (ZSCAN2) of Homo sapiens (Human).